Reading from the N-terminus, the 331-residue chain is Photosystem II assembly lipoprotein Ycf48 (331 aa).

An N-terminal signal peptide occupies residues 1-23 (MIPVIRSFLSLLLCVGLTFGLGG). Residue cysteine 24 is the site of N-palmitoyl cysteine attachment. Cysteine 24 carries the S-diacylglycerol cysteine lipid modification.

This sequence belongs to the Ycf48 family. Part of early PSII assembly complexes which includes D1 (psbA) and PsbI; not found in mature PSII. Binds to the lumenal side of PSII complexes. Interacts with YidC.

Its subcellular location is the cellular thylakoid membrane. Its function is as follows. A factor required for optimal assembly of photosystem II (PSII), acting in the early stages of PSII assembly. Also plays a role in replacement of photodamaged D1 (psbA). Assists YidC in synthesis of chlorophyll-binding proteins. The polypeptide is Photosystem II assembly lipoprotein Ycf48 (Synechococcus sp. (strain RCC307)).